The sequence spans 387 residues: Methylthioribose-1-phosphate isomerase (387 aa).

The Proton donor role is filled by Asp-257.

The protein belongs to the eIF-2B alpha/beta/delta subunits family. MtnA subfamily.

It localises to the cytoplasm. Its subcellular location is the nucleus. It carries out the reaction 5-(methylsulfanyl)-alpha-D-ribose 1-phosphate = 5-(methylsulfanyl)-D-ribulose 1-phosphate. The protein operates within amino-acid biosynthesis; L-methionine biosynthesis via salvage pathway; L-methionine from S-methyl-5-thio-alpha-D-ribose 1-phosphate: step 1/6. Functionally, catalyzes the interconversion of methylthioribose-1-phosphate (MTR-1-P) into methylthioribulose-1-phosphate (MTRu-1-P). This Aspergillus fumigatus (strain CBS 144.89 / FGSC A1163 / CEA10) (Neosartorya fumigata) protein is Methylthioribose-1-phosphate isomerase (mri1).